Here is a 530-residue protein sequence, read N- to C-terminus: MSVSTNLKGLAELGLKPSEVFHNLSYEEIYQHELNNKEGVTSDNGTMMVDTGIFTGRSPKDKYFVDEPSSQNNIWWGPVNTKVSEAIFNELYAEVTKFLDNKKLYVFDGHAGTNDDTRISLRVVTERAWQHHFCTNMFLRPTKEELAKLDPEFTIINASGYKNPKYKEHGLNSEVFVIFHLAKKICIIGGTEYGGEMKKGIFSVMNYYLPLKNVLTMHCSANVGKDGDSALFFGLSGTGKTTLSTDPNRKLIGDDEHGWDDNGIFNIEGGCYAKTINLDPKTEPEIYAAIRRDALLENVVYDATTKKVDYSSAAKTENTRVSYPIFHIDNIQPGSKAGHPNTVIFLTYDAYGVLPAVSKLSIEQAMYHFLSGYTAKVAGTERGVKEPQATFSACFGQAFMTLHPTYYAKLLGEKMKKHQVNAYLINTGLVGGKYGVGKRMNLPATRQIINEILNGNIEKSEFEKHPVFQVSFPKSVNGVDAHILNPRNAWENKEDYDKTAADLAKQFVENYKKYLTGSKEFDYSQYGPIA.

Residues R57, Y193, and K199 each coordinate substrate. ATP contacts are provided by residues K199, H218, and 234 to 242 (GLSGTGKTT). Mn(2+)-binding residues include K199 and H218. Position 255 (D255) interacts with Mn(2+). The ATP site is built by E283, R320, and T445. A substrate-binding site is contributed by R320.

This sequence belongs to the phosphoenolpyruvate carboxykinase (ATP) family. Mn(2+) serves as cofactor.

The protein localises to the cytoplasm. The enzyme catalyses oxaloacetate + ATP = phosphoenolpyruvate + ADP + CO2. It functions in the pathway carbohydrate biosynthesis; gluconeogenesis. In terms of biological role, involved in the gluconeogenesis. Catalyzes the conversion of oxaloacetate (OAA) to phosphoenolpyruvate (PEP) through direct phosphoryl transfer between the nucleoside triphosphate and OAA. This is Phosphoenolpyruvate carboxykinase (ATP) from Leptospira biflexa serovar Patoc (strain Patoc 1 / Ames).